Here is a 275-residue protein sequence, read N- to C-terminus: Glutamate racemase (275 aa).

Residues 12-13 and 44-45 each bind substrate; these read DS and YG. The Proton donor/acceptor role is filled by Cys-75. Substrate is bound at residue 76–77; the sequence is NT. Cys-185 functions as the Proton donor/acceptor in the catalytic mechanism. 186 to 187 contacts substrate; that stretch reads TH.

Belongs to the aspartate/glutamate racemases family.

It catalyses the reaction L-glutamate = D-glutamate. Its pathway is cell wall biogenesis; peptidoglycan biosynthesis. Provides the (R)-glutamate required for cell wall biosynthesis. The protein is Glutamate racemase of Mycolicibacterium paratuberculosis (strain ATCC BAA-968 / K-10) (Mycobacterium paratuberculosis).